Reading from the N-terminus, the 417-residue chain is Methyltransferase/ribosomally synthesized cyclic peptide lentinulin A precursor ledMA (417 aa).

The methyltransferase domain stretch occupies residues M1–K251. Active-site residues include R72, Y76, and Y98. The S-adenosyl-L-methionine site is built by Y98, H100, V103, A130, Q172, A213, S244, and T245. Positions E252 to M378 are clasp domain. Residues P379 to P399 form a precursor leader region. Residue I401 is modified to N-methylisoleucine. N-methylvaline is present on residues V403 and V404. The residue at position 405 (G405) is an N-methylglycine. Residues V406 and V407 each carry the N-methylvaline modification. At G408 the chain carries N-methylglycine. V410 carries the N-methylvaline modification. G411 is subject to N-methylglycine. At V413 the chain carries N-methylvaline.

The protein in the N-terminal section; belongs to the precorrin methyltransferase family. Homodimer. LedMA automethylates at Ile-401, Val-403, Val-404, Gly-405, Val-406, Val-407, Gly-408, Val-410, Gly-411 and Val-413 before being processed by the prolyloligopeptidase ledP which likely forms a peptidyl ester upon removal of the follower propeptide, which then undergoes macrocyclization with the N-terminus of the modified core peptide. Peptide backbone alpha-N-methylations change the physicochemical properties of amide bonds to provide structural constraints and other favorable characteristics including biological membrane permeability to peptides.

Its pathway is mycotoxin biosynthesis. Functionally, fusion protein of the methyltransferase ledM and the lentinulin A core peptide; part of the gene cluster that mediates the biosynthesis of lentinulin A, a highly methylated cyclic dodecapeptide with nematodicidal activity. Lentinulin A derives from the C-terminus of the ledMA protein, and it is the ledMA protein that methylates its own C-terminus using S-adenosyl methionine (SAM). The C-terminus is subsequently cleaved off and macrocyclized by the prolyloligopeptidase ledP to give the final product. This Lentinula edodes (Shiitake mushroom) protein is Methyltransferase/ribosomally synthesized cyclic peptide lentinulin A precursor ledMA.